The following is a 173-amino-acid chain: Small ribosomal subunit protein uS5 (173 aa).

An S5 DRBM domain is found at 18-81; the sequence is LREKMIAVNR…EQARRGMFKV (64 aa).

This sequence belongs to the universal ribosomal protein uS5 family. Part of the 30S ribosomal subunit. Contacts proteins S4 and S8.

With S4 and S12 plays an important role in translational accuracy. Its function is as follows. Located at the back of the 30S subunit body where it stabilizes the conformation of the head with respect to the body. This Bordetella avium (strain 197N) protein is Small ribosomal subunit protein uS5.